The chain runs to 334 residues: Lipoyl synthase (334 aa).

Residues C71, C76, C82, C97, C101, C104, and S312 each contribute to the [4Fe-4S] cluster site. Residues 83-301 (WSHGTATFMV…RQEGLRRGFR (219 aa)) enclose the Radical SAM core domain.

It belongs to the radical SAM superfamily. Lipoyl synthase family. [4Fe-4S] cluster serves as cofactor.

It is found in the cytoplasm. The enzyme catalyses [[Fe-S] cluster scaffold protein carrying a second [4Fe-4S](2+) cluster] + N(6)-octanoyl-L-lysyl-[protein] + 2 oxidized [2Fe-2S]-[ferredoxin] + 2 S-adenosyl-L-methionine + 4 H(+) = [[Fe-S] cluster scaffold protein] + N(6)-[(R)-dihydrolipoyl]-L-lysyl-[protein] + 4 Fe(3+) + 2 hydrogen sulfide + 2 5'-deoxyadenosine + 2 L-methionine + 2 reduced [2Fe-2S]-[ferredoxin]. It functions in the pathway protein modification; protein lipoylation via endogenous pathway; protein N(6)-(lipoyl)lysine from octanoyl-[acyl-carrier-protein]: step 2/2. Functionally, catalyzes the radical-mediated insertion of two sulfur atoms into the C-6 and C-8 positions of the octanoyl moiety bound to the lipoyl domains of lipoate-dependent enzymes, thereby converting the octanoylated domains into lipoylated derivatives. This Halorhodospira halophila (strain DSM 244 / SL1) (Ectothiorhodospira halophila (strain DSM 244 / SL1)) protein is Lipoyl synthase.